A 356-amino-acid chain; its full sequence is MFSLPSLSSWLPSLPSFEWGSSLFDSLLQGLIGALGVSVLNSLLKVYFFVACVNDPQRQPQKQRLSAQWASLEMLHLAGLTLFLTLIGSRVAALVVLEFSLRAVSTLLSLGKGSGNKERLQLFLVCQFSLGCGLSCGLSFLQEGAPHRSLNLLLSLGLAVLLALGARRLTRHICSLYELHSSQRYCGVCLGLLASQHGMPRLLSRTLTVAFAVSDLAAVALINKDFLSSSEAVRFWTPLTICYTLLVIYMQEEQWQHRFSLQGQVQTVLVRMGGLFLLLMTVGRWLDLLSIFFSLLGELWCLAGIRALIDLCQIQGFPPQRPTVTAAVTAEGESGWTDPCEPRPSTPAPARSAVPS.

Helical transmembrane passes span 31–51, 77–97, 120–140, 144–164, 202–222, 232–250, 263–283, and 285–305; these read LIGA…FFVA, LAGL…LVVL, LQLF…GLSF, GAPH…LLAL, LLSR…VALI, AVRF…VIYM, GQVQ…MTVG, and WLDL…LAGI. The disordered stretch occupies residues 331–356; it reads EGESGWTDPCEPRPSTPAPARSAVPS.

Belongs to the TMEM82 family.

It localises to the membrane. The protein is Transmembrane protein 82 (Tmem82) of Mus musculus (Mouse).